The primary structure comprises 615 residues: SLPLHVLAHPQPSTSTSLAGRAGAVDLNEFRVAHRSSYASHDEMKKLPSIASFRQGTYLEVATELVKQTMPNMEFRLVDDHYVGDSGIGHVRFRQTMHGIDIDNSDFNVNVGKDGKILSHGNSFYTGPAPASNPMIKRDFIDPMQALNGVRKALNLPVKADGAHVENMSEHKVMFKGTSGALSDPTAKLCYMAKEDGSLALTWRVETDIGDNWLLSYMDAKESSKVHNVVDYVAHATFQVYKWGLADPTEGKRDILTNPWNLKTSPLTWLADGKTNFTATRGNNAIAQYNPDGGNDYENNYRPSPKNLKFEYPYSPDMNPPKTYIDASVTQLFYTSNVCHDLYYMLGFNEKAGNFQVNNRGQGGKGNDYVILNAQDGSGTNNANFATPPDGQPGRMRAYIWTRANPPRDASFEAGTIIHEYTHGLSNRLCGGPANSRCLNALESGGMGEGWGDFYATAVRLKPNDTRKTNYVKGGWVNNSPKGVRMYPYSTDMNVNPLVYTSNNKLNEVHAIGTVWCTMLYEVLWNLIDKHGKNDGPVPVFENGVPNDGKYLAMKLVMDGMAIQPCNPNFVQARDAILDADMNLTKGANKCEIWKGFAKRGLGVGAKFDPKNRTG.

The signal sequence occupies residues 1 to 8 (SLPLHVLA). The propeptide occupies 9–235 (HPQPSTSTSL…VHNVVDYVAH (227 aa)). Asn276 is a glycosylation site (N-linked (GlcNAc...) asparagine). His419 is a binding site for Zn(2+). Glu420 is a catalytic residue. Zn(2+) is bound at residue His423. 3 N-linked (GlcNAc...) asparagine glycosylation sites follow: Asn464, Asn583, and Asn612.

This sequence belongs to the peptidase M36 family. Zn(2+) is required as a cofactor.

The protein localises to the secreted. In terms of biological role, secreted metalloproteinase probably acting as a virulence factor. The polypeptide is Extracellular metalloproteinase 1 (MEP1) (Trichophyton equinum (Horse ringworm fungus)).